Here is a 271-residue protein sequence, read N- to C-terminus: Methyltransferase psoC (271 aa).

It belongs to the methyltransferase superfamily. LaeA methyltransferase family.

It functions in the pathway secondary metabolite biosynthesis. In terms of biological role, methyltransferase; part of the gene cluster that mediates the biosynthesis of pseurotin A, a competitive inhibitor of chitin synthase and an inducer of nerve-cell proliferation. The PKS-NRPS hybrid synthetase psoA is responsible for the biosynthesis of azaspirene, one of the first intermediates having the 1-oxa-7-azaspiro[4,4]-non-2-ene-4,6-dione core of pseurotin, via condensation of one acetyl-CoA, 4 malonyl-CoA, and a L-phenylalanine molecule. The dual-functional monooxygenase/methyltransferase psoF seems to be involved in the addition of the C3 methyl group onto the pseurotin scaffold. Azaspirene is then converted to synerazol through 4 steps including oxidation of C17 by the cytochrome P450 monooxygenase psoD, O-methylation of the hydroxy group of C8 by the methyltransferase psoC, and the trans-to-cis isomerization of the C13 olefin by the glutathione S-transferase psoE. The fourth step of synerazol production is performed by the dual-functional monooxygenase/methyltransferase psoF which seems to catalyze the epoxidation of the intermediate deepoxy-synerazol. Synerazol can be attacked by a water molecule nonenzymatically at two different positions to yield two diol products, pseurotin A and pseurotin D. This Aspergillus fumigatus (strain ATCC MYA-4609 / CBS 101355 / FGSC A1100 / Af293) (Neosartorya fumigata) protein is Methyltransferase psoC.